We begin with the raw amino-acid sequence, 58 residues long: Large ribosomal subunit protein uL30 (58 aa).

This sequence belongs to the universal ribosomal protein uL30 family. Part of the 50S ribosomal subunit.

The sequence is that of Large ribosomal subunit protein uL30 from Psychromonas ingrahamii (strain DSM 17664 / CCUG 51855 / 37).